The sequence spans 268 residues: MAKAEENLRDKCRWSLGGMTALVTGGSKGLGEAVVEELAMLGARVHTCARNETQLQECVREWQAKGFEVTTSVCDVSSRDQREKLMENVASIFQGKLNILVNNAGTGITKPTTEYTAQDYSFLMATNLDSAFHLSQLAHPLLKASGSGSIVLMSSTAGVVHINVGSIYGATKGAMNQLAKNLACEWARDNIRVNSVCPWFIATPLYLNDEELKKEVERKTPMGRVGNANEVSSLVAFLCFPAASYITGQTICVDGGFTVNCFSFKPVL.

NADP(+) is bound at residue 22 to 46 (LVTGGSKGLGEAVVEELAMLGARVH). Ser155 provides a ligand contact to substrate. The active-site Proton acceptor is the Tyr168.

Belongs to the short-chain dehydrogenases/reductases (SDR) family. SDR65C subfamily.

This is Tropinone reductase homolog At2g29170 from Arabidopsis thaliana (Mouse-ear cress).